The sequence spans 545 residues: Protein BTN1 (545 aa).

Positions 23–49 (AHSSASDPRRTMVTNTSESPLASRQAT) are disordered. The span at 34-49 (MVTNTSESPLASRQAT) shows a compositional bias: polar residues. The next 5 helical transmembrane spans lie at 66–86 (AFFLFGLLNNSLYVVILTAAL), 97–117 (LVSFANIFPALIAKAIWPYFL), 127–147 (VWSCAALSFIGMLLVSFFPAL), 205–225 (VGWFASGTGAAGLIGAAAWWV), and 234–254 (GMAILSVLPAFMIMAYAIILP). The interval 276-304 (TEDDAVERSSSDDQPTTANDDRQDSTIHI) is disordered. Transmembrane regions (helical) follow at residues 322-342 (MALLKPMLQPYIIPLVIVYAM), 408-428 (LLWLPAVLQTGLLAVLLTESL), and 440-460 (LVIVLICVEGLAGGSAYVSVF).

Belongs to the battenin family.

The protein resides in the vacuole membrane. Involved in vacuolar transport and vacuole pH homeostasis. Also required for cytokinesis. The sequence is that of Protein BTN1 (BTN1) from Mycosarcoma maydis (Corn smut fungus).